The sequence spans 507 residues: ATP synthase subunit alpha, chloroplastic (507 aa).

An ATP-binding site is contributed by 170 to 177 (GDRQTGKT). The residue at position 257 (threonine 257) is a Phosphothreonine.

Belongs to the ATPase alpha/beta chains family. As to quaternary structure, F-type ATPases have 2 components, CF(1) - the catalytic core - and CF(0) - the membrane proton channel. CF(1) has five subunits: alpha(3), beta(3), gamma(1), delta(1), epsilon(1). CF(0) has four main subunits: a, b, b' and c.

The protein localises to the plastid. It localises to the chloroplast thylakoid membrane. It carries out the reaction ATP + H2O + 4 H(+)(in) = ADP + phosphate + 5 H(+)(out). Functionally, produces ATP from ADP in the presence of a proton gradient across the membrane. The alpha chain is a regulatory subunit. The protein is ATP synthase subunit alpha, chloroplastic of Aethionema cordifolium (Lebanon stonecress).